We begin with the raw amino-acid sequence, 407 residues long: Peptidase T (407 aa).

Residue histidine 82 coordinates Zn(2+). The active site involves aspartate 84. Residue aspartate 143 coordinates Zn(2+). Catalysis depends on glutamate 177, which acts as the Proton acceptor. The Zn(2+) site is built by glutamate 178, aspartate 200, and histidine 382.

It belongs to the peptidase M20B family. Zn(2+) serves as cofactor.

It is found in the cytoplasm. It catalyses the reaction Release of the N-terminal residue from a tripeptide.. In terms of biological role, cleaves the N-terminal amino acid of tripeptides. In Streptococcus pyogenes serotype M28 (strain MGAS6180), this protein is Peptidase T.